The primary structure comprises 953 residues: Ubiquitin carboxyl-terminal hydrolase CYLD (953 aa).

An interaction with TRIP region spans residues 106-590 (CEERLSLFRN…LEIMIGKKKG (485 aa)). 2 CAP-Gly domains span residues 153–198 (LAER…VFVA) and 253–286 (DVLP…VQLC). A disordered region spans residues 318–350 (FMSRGVGDKGSSSHNKPKVTGSTSDPGSRNRSE). A compositionally biased stretch (polar residues) spans 327-346 (GSSSHNKPKVTGSTSDPGSR). Serine 384 bears the Phosphoserine mark. The disordered stretch occupies residues 387–410 (EMSSDFGHSSPPPQPPSMNSLSSE). An interaction with TRAF2 region spans residues 391 to 466 (DFGHSSPPPQ…MPSSSGNAHG (76 aa)). A phosphoserine mark is found at serine 415 and serine 419. The interval 467–681 (LEVGSLAEVK…FTSEEKDPEE (215 aa)) is interaction with IKBKG/NEMO. A CAP-Gly 3 domain is found at 489–532 (GQPPGLSDVLAGLELEDECAGCTDGTFRGTRYFTCALKKALFVK). The 359-residue stretch at 589–947 (KGIQGHYNSC…DAYMCMYQSP (359 aa)) folds into the USP domain. The active-site Nucleophile is cysteine 598. A B-box region spans residues 778–830 (LEDTPRQCRICGGLAMYECRECYDDPDISAGKIKQFCKTCSTQVHLHPRRLNH). Zn(2+) is bound by residues cysteine 785, cysteine 788, cysteine 796, cysteine 799, cysteine 814, cysteine 817, histidine 822, and histidine 830. The active-site Proton acceptor is histidine 868.

It belongs to the peptidase C19 family. In terms of assembly, interacts (via CAP-Gly domain) with IKBKG/NEMO (via proline-rich C-terminal region). Interacts with TRAF2 and TRIP. Interacts with PLK1, DVL1, DVL3, MAVS, TBK1, IKKE and RIGI. Interacts (via CAP-Gly domain) with microtubules. Interacts with HDAC6 and BCL3. Interacts with MAP3K7. Identified in a complex with TRAF6 and SQSTM1. Interacts with OPTN and SQSTM1. Interacts with CEP350. Interacts with RNF31; the interaction is indirect and is mediated via SPATA2. Interacts with SPATA2 (via the PUB domain); the interaction is direct and recruits CYLD to the LUBAC complex, thereby regulating TNF-alpha-induced necroptosis. In terms of processing, phosphorylated on several serine residues by IKKA and/or IKKB in response to immune stimuli. Phosphorylation requires IKBKG. Phosphorylation abolishes TRAF2 deubiquitination, interferes with the activation of Jun kinases, and strongly reduces CD40-dependent gene activation by NF-kappa-B. Ubiquitinated. Polyubiquitinated in hepatocytes treated with palmitic acid. Ubiquitination is mediated by E3 ligase TRIM47 and leads to proteasomal degradation.

The protein resides in the cytoplasm. The protein localises to the perinuclear region. It is found in the cytoskeleton. Its subcellular location is the cell membrane. It localises to the microtubule organizing center. The protein resides in the centrosome. The protein localises to the spindle. It is found in the cilium basal body. The catalysed reaction is Thiol-dependent hydrolysis of ester, thioester, amide, peptide and isopeptide bonds formed by the C-terminal Gly of ubiquitin (a 76-residue protein attached to proteins as an intracellular targeting signal).. In terms of biological role, deubiquitinase that specifically cleaves 'Lys-63'- and linear 'Met-1'-linked polyubiquitin chains and is involved in NF-kappa-B activation and TNF-alpha-induced necroptosis. Negatively regulates NF-kappa-B activation by deubiquitinating upstream signaling factors. Contributes to the regulation of cell survival, proliferation and differentiation via its effects on NF-kappa-B activation. Negative regulator of Wnt signaling. Inhibits HDAC6 and thereby promotes acetylation of alpha-tubulin and stabilization of microtubules. Plays a role in the regulation of microtubule dynamics, and thereby contributes to the regulation of cell proliferation, cell polarization, cell migration, and angiogenesis. Required for normal cell cycle progress and normal cytokinesis. Inhibits nuclear translocation of NF-kappa-B. Plays a role in the regulation of inflammation and the innate immune response, via its effects on NF-kappa-B activation. Dispensable for the maturation of intrathymic natural killer cells, but required for the continued survival of immature natural killer cells. Negatively regulates TNFRSF11A signaling and osteoclastogenesis. Involved in the regulation of ciliogenesis, allowing ciliary basal bodies to migrate and dock to the plasma membrane; this process does not depend on NF-kappa-B activation. Ability to remove linear ('Met-1'-linked) polyubiquitin chains regulates innate immunity and TNF-alpha-induced necroptosis: recruited to the LUBAC complex via interaction with SPATA2 and restricts linear polyubiquitin formation on target proteins. Regulates innate immunity by restricting linear polyubiquitin formation on RIPK2 in response to NOD2 stimulation. Involved in TNF-alpha-induced necroptosis by removing linear ('Met-1'-linked) polyubiquitin chains from RIPK1, thereby regulating the kinase activity of RIPK1. Negatively regulates intestinal inflammation by removing 'Lys-63' linked polyubiquitin chain of NLRP6, thereby reducing the interaction between NLRP6 and PYCARD/ASC and formation of the NLRP6 inflammasome. Does not catalyze deubiquitination of heterotypic 'Lys-63'-/'Lys-48'-linked branched ubiquitin chains. Removes 'Lys-63' linked polyubiquitin chain of MAP3K7, which inhibits phosphorylation and blocks downstream activation of the JNK-p38 kinase cascades. Also removes 'Lys-63'-linked polyubiquitin chains of MAP3K1 and MA3P3K3, which inhibit their interaction with MAP2K1 and MAP2K2. The chain is Ubiquitin carboxyl-terminal hydrolase CYLD (Cyld) from Rattus norvegicus (Rat).